The primary structure comprises 153 residues: MKLNELYNNIGAKKNKKRIARGIGSGKGKTGGRGIKGQKSRSGVAIKGFEGGQTPMIKRLPKRGFNCISTKKYNIINIYNIEEALADGRLSADDTITKEKLVEAGVVNNKNNKKLVKLLSICSDDFTSPLSLKLDAYSAKAKDLIEKAGGKLL.

The tract at residues 21-41 (RGIGSGKGKTGGRGIKGQKSR) is disordered. Residues 23–35 (IGSGKGKTGGRGI) show a composition bias toward gly residues.

Belongs to the universal ribosomal protein uL15 family. Part of the 50S ribosomal subunit.

In terms of biological role, binds to the 23S rRNA. This chain is Large ribosomal subunit protein uL15, found in Rickettsia massiliae (strain Mtu5).